Here is a 331-residue protein sequence, read N- to C-terminus: LIM/homeobox protein Lhx9 (331 aa).

LIM zinc-binding domains lie at 71–132 (TLCA…FSVK) and 133–194 (RCAR…LVQG). The segment at 253–275 (ETDLDRDQTYPPSQKTKRMRTSF) is disordered. A DNA-binding region (homeobox) is located at residues 268–327 (TKRMRTSFKHHQLRTMKSYFAINHNPDAKDLKQLAQKTGLTKRVLQGEQCSGFNSHTTRR).

The protein localises to the nucleus. Its function is as follows. May be involved in gonadal development. This chain is LIM/homeobox protein Lhx9 (lhx9), found in Xenopus laevis (African clawed frog).